The following is a 240-amino-acid chain: Biosynthetic peptidoglycan transglycosylase (240 aa).

A helical membrane pass occupies residues 16 to 36 (VLMALLCLFLIYELAMFSMVV).

This sequence belongs to the glycosyltransferase 51 family.

It localises to the cell inner membrane. It catalyses the reaction [GlcNAc-(1-&gt;4)-Mur2Ac(oyl-L-Ala-gamma-D-Glu-L-Lys-D-Ala-D-Ala)](n)-di-trans,octa-cis-undecaprenyl diphosphate + beta-D-GlcNAc-(1-&gt;4)-Mur2Ac(oyl-L-Ala-gamma-D-Glu-L-Lys-D-Ala-D-Ala)-di-trans,octa-cis-undecaprenyl diphosphate = [GlcNAc-(1-&gt;4)-Mur2Ac(oyl-L-Ala-gamma-D-Glu-L-Lys-D-Ala-D-Ala)](n+1)-di-trans,octa-cis-undecaprenyl diphosphate + di-trans,octa-cis-undecaprenyl diphosphate + H(+). It functions in the pathway cell wall biogenesis; peptidoglycan biosynthesis. Its function is as follows. Peptidoglycan polymerase that catalyzes glycan chain elongation from lipid-linked precursors. This chain is Biosynthetic peptidoglycan transglycosylase, found in Bordetella avium (strain 197N).